Consider the following 764-residue polypeptide: Phosphoribosylformylglycinamidine synthase subunit PurL (764 aa).

The segment at 1-23 (MTQEVDTVERAAATPDHPQPYRE) is disordered. The active site involves histidine 57. ATP-binding residues include tyrosine 60 and lysine 104. Residue glutamate 106 participates in Mg(2+) binding. Residues 107–110 (SHNH) and arginine 129 contribute to the substrate site. Histidine 108 functions as the Proton acceptor in the catalytic mechanism. Aspartate 130 lines the Mg(2+) pocket. Glutamine 258 is a substrate binding site. Aspartate 286 provides a ligand contact to Mg(2+). 330-332 (ESQ) lines the substrate pocket. ATP-binding residues include asparagine 518 and glycine 555. Asparagine 556 is a Mg(2+) binding site. Position 558 (serine 558) interacts with substrate.

It belongs to the FGAMS family. In terms of assembly, monomer. Part of the FGAM synthase complex composed of 1 PurL, 1 PurQ and 2 PurS subunits.

The protein localises to the cytoplasm. The catalysed reaction is N(2)-formyl-N(1)-(5-phospho-beta-D-ribosyl)glycinamide + L-glutamine + ATP + H2O = 2-formamido-N(1)-(5-O-phospho-beta-D-ribosyl)acetamidine + L-glutamate + ADP + phosphate + H(+). It functions in the pathway purine metabolism; IMP biosynthesis via de novo pathway; 5-amino-1-(5-phospho-D-ribosyl)imidazole from N(2)-formyl-N(1)-(5-phospho-D-ribosyl)glycinamide: step 1/2. Its function is as follows. Part of the phosphoribosylformylglycinamidine synthase complex involved in the purines biosynthetic pathway. Catalyzes the ATP-dependent conversion of formylglycinamide ribonucleotide (FGAR) and glutamine to yield formylglycinamidine ribonucleotide (FGAM) and glutamate. The FGAM synthase complex is composed of three subunits. PurQ produces an ammonia molecule by converting glutamine to glutamate. PurL transfers the ammonia molecule to FGAR to form FGAM in an ATP-dependent manner. PurS interacts with PurQ and PurL and is thought to assist in the transfer of the ammonia molecule from PurQ to PurL. The sequence is that of Phosphoribosylformylglycinamidine synthase subunit PurL from Mycolicibacterium vanbaalenii (strain DSM 7251 / JCM 13017 / BCRC 16820 / KCTC 9966 / NRRL B-24157 / PYR-1) (Mycobacterium vanbaalenii).